Consider the following 460-residue polypeptide: Chromosomal replication initiator protein DnaA (460 aa).

Residues 1–91 (MNLTSPKVST…SLWQSEDKSI (91 aa)) are domain I, interacts with DnaA modulators. The segment at 91–122 (IRSIDIQVIEERNSNFNVILKNREESNHNLGS) is domain II. The tract at residues 123-342 (PLDPRFTFDN…GALNKVTHTS (220 aa)) is domain III, AAA+ region. The ATP site is built by Gly-169, Gly-171, Lys-172, and Thr-173. The tract at residues 343 to 460 (LIGRSMTVES…EINRLKKMFK (118 aa)) is domain IV, binds dsDNA.

It belongs to the DnaA family. Oligomerizes as a right-handed, spiral filament on DNA at oriC.

It localises to the cytoplasm. Plays an essential role in the initiation and regulation of chromosomal replication. ATP-DnaA binds to the origin of replication (oriC) to initiate formation of the DNA replication initiation complex once per cell cycle. Binds the DnaA box (a 9 base pair repeat at the origin) and separates the double-stranded (ds)DNA. Forms a right-handed helical filament on oriC DNA; dsDNA binds to the exterior of the filament while single-stranded (ss)DNA is stabiized in the filament's interior. The ATP-DnaA-oriC complex binds and stabilizes one strand of the AT-rich DNA unwinding element (DUE), permitting loading of DNA polymerase. After initiation quickly degrades to an ADP-DnaA complex that is not apt for DNA replication. Binds acidic phospholipids. This chain is Chromosomal replication initiator protein DnaA, found in Wolbachia pipientis wMel.